Here is a 102-residue protein sequence, read N- to C-terminus: Large ribosomal subunit protein bL21 (102 aa).

It belongs to the bacterial ribosomal protein bL21 family. In terms of assembly, part of the 50S ribosomal subunit. Contacts protein L20.

In terms of biological role, this protein binds to 23S rRNA in the presence of protein L20. This Campylobacter jejuni subsp. doylei (strain ATCC BAA-1458 / RM4099 / 269.97) protein is Large ribosomal subunit protein bL21.